Here is a 283-residue protein sequence, read N- to C-terminus: Diaminopimelate epimerase (283 aa).

Residues Asn-13 and Asn-66 each contribute to the substrate site. Catalysis depends on Cys-75, which acts as the Proton donor. Residues 76 to 77 (GN), Asn-165, Asn-198, and 216 to 217 (ER) each bind substrate. Cys-225 functions as the Proton acceptor in the catalytic mechanism. Residue 226-227 (GT) coordinates substrate.

Belongs to the diaminopimelate epimerase family. In terms of assembly, homodimer.

It localises to the cytoplasm. The catalysed reaction is (2S,6S)-2,6-diaminopimelate = meso-2,6-diaminopimelate. It participates in amino-acid biosynthesis; L-lysine biosynthesis via DAP pathway; DL-2,6-diaminopimelate from LL-2,6-diaminopimelate: step 1/1. Catalyzes the stereoinversion of LL-2,6-diaminopimelate (L,L-DAP) to meso-diaminopimelate (meso-DAP), a precursor of L-lysine and an essential component of the bacterial peptidoglycan. The protein is Diaminopimelate epimerase of Acaryochloris marina (strain MBIC 11017).